The sequence spans 1188 residues: Adenomatous polyposis coli protein-related protein 1 (1188 aa).

The disordered stretch occupies residues 1-50 (MSSSSSDENETTIHRTGSNTGGSGIYSQPRAGSSKRTSNVRHDVSDVDDE). Residues 1-486 (MSSSSSDENE…LSLRATRASP (486 aa)) are required for interaction with bar-1 and hmp-2. Residues 314 to 358 (NCLKVLASLLSPDARFTSLVDSATGILKYVSQYLANTSTHLELRS) form an ARM repeat. Low complexity predominate over residues 579 to 588 (IQQQQQMQKA). Disordered stretches follow at residues 579–624 (IQQQ…SMNP), 670–702 (TESE…DGAT), 726–751 (TPNG…GPSL), 778–952 (QSEM…TMRF), 1003–1092 (CSMI…LKDK), and 1157–1181 (YQKP…PNPK). The segment at 600–1188 (DLDIPTSTVM…NPKQMLVTIV (589 aa)) is required for interaction with pry-1. 2 stretches are compositionally biased toward polar residues: residues 604–624 (PTST…SMNP) and 677–701 (LTSQ…SDGA). 2 stretches are compositionally biased toward polar residues: residues 778 to 788 (QSEMPTSSSTP) and 800 to 811 (FSPTQKTTSSPA). 2 stretches are compositionally biased toward basic and acidic residues: residues 832–843 (RRQDASDADRLL) and 871–900 (EPER…DHNG). 4 stretches are compositionally biased toward polar residues: residues 909–929 (WSPQ…SSED), 937–946 (EPNSSTSGAA), 1014–1039 (QRNE…SASS), and 1164–1180 (GRNN…TPNP).

It belongs to the adenomatous polyposis coli (APC) family. As to quaternary structure, interacts (via N-terminus) with bar-1 and hmp-2; the interaction with hmp-2 is relatively weak. Interacts (via C-terminus) with pry-1 (via N-terminus). Probably associates with bar-1, gsk-3, pry-1 in a complex. During the L1 stage, expressed in vulval precursor cells (P3-8.p), seam cells and excretory cells.

It is found in the cell junction. The protein resides in the adherens junction. The protein localises to the cytoplasm. Its subcellular location is the nucleus. Its function is as follows. Has a role in endoderm cell specification and pharyngeal development. Required for the migration of epithelial cells, organization of the anterior seam cells and ceh-13 expression during embryo morphogenesis. Prevents hyperactivation of the Wnt signaling pathway during endoderm development, probably by preventing hmp-2 nuclear translocation. During larval development, apr-1 is required for expression of lin-39 in P3-8.p. Shown to negatively regulate Wnt signaling in vulval precursor cells. Has a role in cell division by establishing the polarity of the mother cell which forms the asymmetries of the daughter nuclei. During the L4 larval stage, it is required for the asymmetric division and self-renewal of seam cells. Thought to regulate export of wrm-1 from the nucleus possibly as part of a complex involving pry-1. The sequence is that of Adenomatous polyposis coli protein-related protein 1 from Caenorhabditis elegans.